Here is a 209-residue protein sequence, read N- to C-terminus: Small ribosomal subunit protein uS4 (209 aa).

In terms of domain architecture, S4 RNA-binding spans 98–164; the sequence is SRLDNVVYRG…TPFIVARETA (67 aa).

It belongs to the universal ribosomal protein uS4 family. Part of the 30S ribosomal subunit. Contacts protein S5. The interaction surface between S4 and S5 is involved in control of translational fidelity.

In terms of biological role, one of the primary rRNA binding proteins, it binds directly to 16S rRNA where it nucleates assembly of the body of the 30S subunit. Its function is as follows. With S5 and S12 plays an important role in translational accuracy. The sequence is that of Small ribosomal subunit protein uS4 from Frankia alni (strain DSM 45986 / CECT 9034 / ACN14a).